The chain runs to 64 residues: Large ribosomal subunit protein bL35 (64 aa).

The protein belongs to the bacterial ribosomal protein bL35 family.

In Vibrio metschnikovii, this protein is Large ribosomal subunit protein bL35.